Consider the following 428-residue polypeptide: Light-independent protochlorophyllide reductase subunit N (428 aa).

[4Fe-4S] cluster contacts are provided by cysteine 29, cysteine 54, and cysteine 115.

This sequence belongs to the BchN/ChlN family. In terms of assembly, protochlorophyllide reductase is composed of three subunits; BchL, BchN and BchB. Forms a heterotetramer of two BchB and two BchN subunits. The cofactor is [4Fe-4S] cluster.

The catalysed reaction is chlorophyllide a + oxidized 2[4Fe-4S]-[ferredoxin] + 2 ADP + 2 phosphate = protochlorophyllide a + reduced 2[4Fe-4S]-[ferredoxin] + 2 ATP + 2 H2O. The protein operates within porphyrin-containing compound metabolism; bacteriochlorophyll biosynthesis (light-independent). Functionally, component of the dark-operative protochlorophyllide reductase (DPOR) that uses Mg-ATP and reduced ferredoxin to reduce ring D of protochlorophyllide (Pchlide) to form chlorophyllide a (Chlide). This reaction is light-independent. The NB-protein (BchN-BchB) is the catalytic component of the complex. The protein is Light-independent protochlorophyllide reductase subunit N of Cereibacter sphaeroides (strain ATCC 17025 / ATH 2.4.3) (Rhodobacter sphaeroides).